Consider the following 125-residue polypeptide: PCNA-associated factor (125 aa).

Residues 1 to 125 are disordered; the sequence is MVRTKADSAG…SEEAADSDDE (125 aa). Low complexity predominate over residues 8–17; that stretch reads SAGSSASSGS. Positions 28–39 match the D-box motif; sequence RKTFGSSSSGSN. A PIP-box motif is present at residues 68 to 79; that stretch reads QKGIGEFFGSPS. A KEN box motif is present at residues 85 to 87; the sequence is KEN. The Initiation motif signature appears at 95 to 107; the sequence is EAGGSGAGKAPRK. The segment covering 115 to 125 has biased composition (acidic residues); that stretch reads PSEEAADSDDE.

Interacts with pcna.

It is found in the nucleus. The protein localises to the cytoplasm. Its subcellular location is the perinuclear region. Functionally, PCNA-binding protein that acts as a regulator of DNA repair during DNA replication. Following DNA damage, the interaction with pcna is disrupted, facilitating the interaction between monoubiquitinated pcna and the translesion DNA synthesis DNA polymerase eta (polh) at stalled replisomes, facilitating the bypass of replication-fork-blocking lesions. Also acts as a regulator of centrosome number. In Xenopus tropicalis (Western clawed frog), this protein is PCNA-associated factor.